A 361-amino-acid chain; its full sequence is Allatostatin-A receptor (361 aa).

At 1–46 (MESTEDEFYTICLNLTAEDPSFGNCNYTTDFENGELLEKVVSRVVP) the chain is on the extracellular side. 2 N-linked (GlcNAc...) asparagine glycosylation sites follow: Asn-14 and Asn-26. The helical transmembrane segment at 47–67 (IFFGFIGIVGLVGNALVVLVV) threads the bilayer. The Cytoplasmic portion of the chain corresponds to 68 to 78 (AANPGMRSTTN). A helical membrane pass occupies residues 79–99 (LLIINLAVADLLFVIFCVPFT). The Extracellular portion of the chain corresponds to 100–116 (ATDYVMPRWPFGDWWCK). Residues Cys-115 and Cys-196 are joined by a disulfide bond. A helical membrane pass occupies residues 117-137 (VVQYFIVVTAHASVYTLVLMS). The Cytoplasmic portion of the chain corresponds to 138-158 (LDRFMAVVHPIASMSIRTEKN). Residues 159–179 (ALLAIACIWVVILTTAIPVGI) traverse the membrane as a helical segment. Topologically, residues 180–212 (CHGEREYSYFNRNHSSCVFLEERGYSKLGFQMS) are extracellular. An N-linked (GlcNAc...) asparagine glycan is attached at Asn-192. A helical transmembrane segment spans residues 213–233 (FFLSSYVIPLALISVLYMCML). Over 234–259 (TRLWKSAPGGRVSAESRRGRKKVTRM) the chain is Cytoplasmic. A helical membrane pass occupies residues 260–280 (VVVVVVVFAVCWCPIQIILLV). At 281–296 (KALNKYHITYFTVTAQ) the chain is on the extracellular side. A helical transmembrane segment spans residues 297-317 (IVSHVLAYMNSCVNPVLYAFL). Topologically, residues 318–361 (SENFRVAFRKVMYCPPPYNDGFSGRPQATKTTRTGNGNSCHDIV) are cytoplasmic. The disordered stretch occupies residues 341 to 361 (GRPQATKTTRTGNGNSCHDIV). A compositionally biased stretch (polar residues) spans 343–361 (PQATKTTRTGNGNSCHDIV).

This sequence belongs to the G-protein coupled receptor 1 family. As to expression, expressed in the midgut and, to a lesser extent, in the fore- and hindgut of fifth instar larvae. Also highly expressed in the brain of fourth and fifth instar larvae.

It is found in the cell membrane. Functionally, acts as a receptor for A-type allatostatin neuropeptide hormones. The polypeptide is Allatostatin-A receptor (Bombyx mori (Silk moth)).